Consider the following 238-residue polypeptide: Large ribosomal subunit protein uL1 (238 aa).

The protein belongs to the universal ribosomal protein uL1 family. Part of the 50S ribosomal subunit.

Binds directly to 23S rRNA. The L1 stalk is quite mobile in the ribosome, and is involved in E site tRNA release. In terms of biological role, protein L1 is also a translational repressor protein, it controls the translation of the L11 operon by binding to its mRNA. This Frankia alni (strain DSM 45986 / CECT 9034 / ACN14a) protein is Large ribosomal subunit protein uL1.